We begin with the raw amino-acid sequence, 159 residues long: Phosphopantetheine adenylyltransferase (159 aa).

T9 contacts substrate. ATP contacts are provided by residues 9–10 (TF) and H17. Substrate contacts are provided by K41, L73, and R87. Residues 88–90 (GLR), E98, and 123–129 (YMFISAT) each bind ATP.

This sequence belongs to the bacterial CoaD family. In terms of assembly, homohexamer. The cofactor is Mg(2+).

It is found in the cytoplasm. It catalyses the reaction (R)-4'-phosphopantetheine + ATP + H(+) = 3'-dephospho-CoA + diphosphate. It participates in cofactor biosynthesis; coenzyme A biosynthesis; CoA from (R)-pantothenate: step 4/5. Its function is as follows. Reversibly transfers an adenylyl group from ATP to 4'-phosphopantetheine, yielding dephospho-CoA (dPCoA) and pyrophosphate. The polypeptide is Phosphopantetheine adenylyltransferase (Nitrosomonas europaea (strain ATCC 19718 / CIP 103999 / KCTC 2705 / NBRC 14298)).